The following is a 352-amino-acid chain: Phosphate acyltransferase (352 aa).

It belongs to the PlsX family. Homodimer. Probably interacts with PlsY.

It is found in the cytoplasm. The enzyme catalyses a fatty acyl-[ACP] + phosphate = an acyl phosphate + holo-[ACP]. It participates in lipid metabolism; phospholipid metabolism. Functionally, catalyzes the reversible formation of acyl-phosphate (acyl-PO(4)) from acyl-[acyl-carrier-protein] (acyl-ACP). This enzyme utilizes acyl-ACP as fatty acyl donor, but not acyl-CoA. This chain is Phosphate acyltransferase, found in Brucella anthropi (strain ATCC 49188 / DSM 6882 / CCUG 24695 / JCM 21032 / LMG 3331 / NBRC 15819 / NCTC 12168 / Alc 37) (Ochrobactrum anthropi).